A 110-amino-acid polypeptide reads, in one-letter code: PCNA-associated factor (110 aa).

Residue Lys-15 forms a Glycyl lysine isopeptide (Lys-Gly) (interchain with G-Cter in ubiquitin) linkage. The D-box motif lies at 23–34 (RKVLGSSTFVTN). Lys-24 is modified (N6-acetyllysine; alternate). Lys-24 is covalently cross-linked (Glycyl lysine isopeptide (Lys-Gly) (interchain with G-Cter in ubiquitin); alternate). Phosphoserine is present on residues Ser-28 and Ser-71. Positions 28–39 (SSTFVTNSSSSS) are enriched in low complexity. The disordered stretch occupies residues 28–110 (SSTFVTNSSS…QPDHRDDENE (83 aa)). The PIP-box signature appears at 61–71 (QKGIGEFFRLS). The segment covering 71–80 (SPKESKKENQ) has biased composition (basic and acidic residues). The KEN box signature appears at 77–79 (KEN). Positions 84 to 96 (EAGTSGLGKAKRK) match the Initiation motif motif.

In terms of assembly, interacts (when monoubiquitinated at Lys-15 and Lys-24) with PCNA. Interacts with isoform 2/p33ING1b of ING1. Interacts with BRCA1. Monoubiquitinated at Lys-15 and Lys-24 during normal S phase, promoting its association with PCNA. Also diubiquitinated at these 2 sites. Following DNA damage, monoubiquitin chains at Lys-15 and Lys-24 are probably extended, leading to disrupt the interaction with PCNA. Polyubiquitinated by the APC/C complex at the mitotic exit, leading to its degradation by the proteasome.

The protein localises to the nucleus. It is found in the cytoplasm. It localises to the perinuclear region. In terms of biological role, PCNA-binding protein that acts as a regulator of DNA repair during DNA replication. Following DNA damage, the interaction with PCNA is disrupted, facilitating the interaction between monoubiquitinated PCNA and the translesion DNA synthesis DNA polymerase eta (POLH) at stalled replisomes, facilitating the bypass of replication-fork-blocking lesions. Also acts as a regulator of centrosome number. This is PCNA-associated factor from Mus musculus (Mouse).